A 206-amino-acid chain; its full sequence is MGQKVNPKVFRLQINSNTWDSVWCATDDYKQKLHQDLFIRSYINESFKHAGISKVTVERTVTLVSVIIHSSKPGVIIGKKGLDVEKIKQKIAKKVESSVEVNVVGVKKSEIDAVLISRSITHQLEKRISCRRAMKKAIQNCLKMGAEGIKVSCSGRLGGAEIARTEWYKEGRLPLHTLRANIDYAFCEAKTICGIIGVKVWVYVGS.

The KH type-2 domain occupies 39-107 (IRSYINESFK…SVEVNVVGVK (69 aa)).

It belongs to the universal ribosomal protein uS3 family. In terms of assembly, part of the 30S ribosomal subunit. Forms a tight complex with proteins S10 and S14.

Its function is as follows. Binds the lower part of the 30S subunit head. Binds mRNA in the 70S ribosome, positioning it for translation. This Wolbachia pipientis subsp. Culex pipiens (strain wPip) protein is Small ribosomal subunit protein uS3.